Here is a 634-residue protein sequence, read N- to C-terminus: Chaperone protein dnaK2 (634 aa).

At T197 the chain carries Phosphothreonine; by autocatalysis. A compositionally biased stretch (low complexity) spans 601–623; that stretch reads GAAAAESGADAGAAGAGDSSSGD. Residues 601 to 634 are disordered; it reads GAAAAESGADAGAAGAGDSSSGDDVIDAEFTESK. Over residues 624-634 the composition is skewed to acidic residues; sequence DVIDAEFTESK.

Belongs to the heat shock protein 70 family.

Acts as a chaperone. The polypeptide is Chaperone protein dnaK2 (dnaK2) (Prochlorococcus marinus (strain MIT 9313)).